We begin with the raw amino-acid sequence, 205 residues long: Large ribosomal subunit protein uL4 (205 aa).

The protein belongs to the universal ribosomal protein uL4 family. In terms of assembly, part of the 50S ribosomal subunit. Contacts proteins L15 and L34.

Functionally, one of the primary rRNA binding proteins, this protein initially binds near the 5'-end of the 23S rRNA. It is important during the early stages of 50S assembly. In terms of biological role, makes multiple contacts with different domains of the 23S rRNA in the assembled 50S subunit. This protein is located close to the polypeptide exit tunnel, and interacts with the modified macrolide azithromycin, which blocks the tunnel. This chain is Large ribosomal subunit protein uL4 (rplD), found in Deinococcus radiodurans (strain ATCC 13939 / DSM 20539 / JCM 16871 / CCUG 27074 / LMG 4051 / NBRC 15346 / NCIMB 9279 / VKM B-1422 / R1).